A 316-amino-acid chain; its full sequence is UDP-N-acetylenolpyruvoylglucosamine reductase (316 aa).

The FAD-binding PCMH-type domain maps to V27–K225. R190 is an active-site residue. The Proton donor role is filled by S239. Residue E309 is part of the active site.

The protein belongs to the MurB family. It depends on FAD as a cofactor.

Its subcellular location is the cytoplasm. It catalyses the reaction UDP-N-acetyl-alpha-D-muramate + NADP(+) = UDP-N-acetyl-3-O-(1-carboxyvinyl)-alpha-D-glucosamine + NADPH + H(+). The protein operates within cell wall biogenesis; peptidoglycan biosynthesis. Functionally, cell wall formation. In Coxiella burnetii (strain RSA 331 / Henzerling II), this protein is UDP-N-acetylenolpyruvoylglucosamine reductase.